A 493-amino-acid polypeptide reads, in one-letter code: Galactose-1-phosphate uridylyltransferase (493 aa).

Belongs to the galactose-1-phosphate uridylyltransferase type 2 family.

It localises to the cytoplasm. The enzyme catalyses alpha-D-galactose 1-phosphate + UDP-alpha-D-glucose = alpha-D-glucose 1-phosphate + UDP-alpha-D-galactose. The protein operates within carbohydrate metabolism; galactose metabolism. The polypeptide is Galactose-1-phosphate uridylyltransferase (galT) (Lactococcus lactis subsp. lactis (strain IL1403) (Streptococcus lactis)).